The sequence spans 334 residues: METTGEVVKTTTGSDGGVTVVRSNAPSDFHMAPRSETSNTPPNSVAPPPPPPPQNSFTPSAAMDGFSSGPIKKRRGRPRKYGHDGAAVTLSPNPISSAAPTTSHVIDFSTTSEKRGKMKPATPTPSSFIRPKYQVENLGEWSPSSAAANFTPHIITVNAGEDVTKRIISFSQQGSLAICVLCANGVVSSVTLRQPDSSGGTLTYEGRFEILSLSGTFMPSDSDGTRSRTGGMSVSLASPDGRVVGGGVAGLLVAATPIQVVVGTFLGGTNQQEQTPKPHNHNFMSSPLMPTSSNVADHRTIRPMTSSLPISTWTPSFPSDSRHKHSHDFNITLT.

A compositionally biased stretch (low complexity) spans 1 to 21; the sequence is METTGEVVKTTTGSDGGVTVV. 2 disordered regions span residues 1 to 103 and 109 to 128; these read METT…PTTS and STTS…PSSF. Over residues 44 to 54 the composition is skewed to pro residues; the sequence is SVAPPPPPPPQ. Positions 71–80 are enriched in basic residues; sequence IKKRRGRPRK. The short motif at 72-80 is the Bipartite nuclear localization signal element; sequence KKRRGRPRK. The a.T hook DNA-binding region spans 72–84; it reads KKRRGRPRKYGHD. Polar residues predominate over residues 90-103; it reads LSPNPISSAAPTTS. The PPC domain maps to 147–287; the sequence is AANFTPHIIT…PHNHNFMSSP (141 aa). Polar residues predominate over residues 306–319; it reads SSLPISTWTPSFPS. The disordered stretch occupies residues 306-334; sequence SSLPISTWTPSFPSDSRHKHSHDFNITLT.

It is found in the nucleus. Functionally, transcription factor that specifically binds AT-rich DNA sequences related to the nuclear matrix attachment regions (MARs). The chain is AT-hook motif nuclear-localized protein 2 from Arabidopsis thaliana (Mouse-ear cress).